Consider the following 235-residue polypeptide: Ribosomal RNA small subunit methyltransferase G (235 aa).

S-adenosyl-L-methionine-binding positions include G74, F79, 97–99, 125–126, and R144; these read EAT and AE.

It belongs to the methyltransferase superfamily. RNA methyltransferase RsmG family.

Its subcellular location is the cytoplasm. In terms of biological role, specifically methylates the N7 position of a guanine in 16S rRNA. The sequence is that of Ribosomal RNA small subunit methyltransferase G from Dehalococcoides mccartyi (strain CBDB1).